The following is a 269-amino-acid chain: Mitochondrial S-adenosylmethionine carrier protein (269 aa).

Solcar repeat units follow at residues 4–77, 85–167, and 176–264; these read REFC…AKQL, LSPI…LKDL, and VDSW…VRTL. 6 consecutive transmembrane segments (helical) span residues 5-25, 49-69, 84-104, 141-161, 181-201, and 237-257; these read EFCA…LILF, IYAG…AFFV, YLSP…ACLI, RGYK…FPLW, SAVC…PLDV, and FAGV…FLGA.

This sequence belongs to the mitochondrial carrier (TC 2.A.29) family.

The protein resides in the mitochondrion inner membrane. The enzyme catalyses S-adenosyl-L-homocysteine(out) + S-adenosyl-L-methionine(in) = S-adenosyl-L-homocysteine(in) + S-adenosyl-L-methionine(out). Its function is as follows. Mitochondrial S-adenosyl-L-methionine/S-adenosyl-L-homocysteine antiporter. Mediates the exchange of cytosolic S-adenosyl-L-methionine, the predominant methyl-group donor for macromolecule methylation processes, for mitochondrial S-adenosylhomocysteine(SAH), a by-product of methylation reactions. The sequence is that of Mitochondrial S-adenosylmethionine carrier protein (slc25a26) from Xenopus tropicalis (Western clawed frog).